The primary structure comprises 316 residues: tRNA-splicing endonuclease subunit Sen34 (316 aa).

The segment at 120–184 (QAAKKQKLEQ…PGPSNGVTPL (65 aa)) is disordered. Polar residues-rich tracts occupy residues 144–159 (EATQGSETSDDGQPSA) and 168–181 (LDSSSPQPGPSNGV). Active-site residues include Tyr-253, His-261, and Lys-292.

The protein belongs to the tRNA-intron endonuclease family. As to quaternary structure, tRNA splicing endonuclease is a heterotetramer composed of TSEN2, TSEN15, TSEN34/LENG5 and TSEN54. tRNA splicing endonuclease complex also contains proteins of the pre-mRNA 3'-end processing machinery such as CLP1, CPSF1, CPSF4 and CSTF2.

The protein localises to the nucleus. It localises to the nucleolus. The catalysed reaction is pretRNA = a 3'-half-tRNA molecule with a 5'-OH end + a 5'-half-tRNA molecule with a 2',3'-cyclic phosphate end + an intron with a 2',3'-cyclic phosphate and a 5'-hydroxyl terminus.. Constitutes one of the two catalytic subunit of the tRNA-splicing endonuclease complex, a complex responsible for identification and cleavage of the splice sites in pre-tRNA. It cleaves pre-tRNA at the 5'- and 3'-splice sites to release the intron. The products are an intron and two tRNA half-molecules bearing 2',3'-cyclic phosphate and 5'-OH termini. There are no conserved sequences at the splice sites, but the intron is invariably located at the same site in the gene, placing the splice sites an invariant distance from the constant structural features of the tRNA body. The tRNA splicing endonuclease is also involved in mRNA processing via its association with pre-mRNA 3'-end processing factors, establishing a link between pre-tRNA splicing and pre-mRNA 3'-end formation, suggesting that the endonuclease subunits function in multiple RNA-processing events. The polypeptide is tRNA-splicing endonuclease subunit Sen34 (Tsen34) (Mus musculus (Mouse)).